We begin with the raw amino-acid sequence, 186 residues long: ADP-ribosylation factor-like protein 8B (186 aa).

Methionine 1 carries the post-translational modification N-acetylmethionine. Positions 1–19 (MLALISRLLDWFRSLFWKE) form an intramembrane region, note=Mediates targeting to membranes. GTP is bound by residues 29–35 (QYSGKTT), 71–75 (DIGGQ), and 130–133 (NKRD). A Glycyl lysine isopeptide (Lys-Gly) (interchain with G-Cter in ubiquitin) cross-link involves residue lysine 141.

Belongs to the small GTPase superfamily. Arf family. Interacts with tubulin. Interacts with BORCS5; recruits ARL8B to lysosomes. Interacts with VPS41; the interaction mediates the recruitment of the HOPS complex to lysosomes. Interacts (GTP-bound form) with PLEKHM2 (via RUN domain); the interaction is required to recruit the motor protein kinesin-1 on lysosomes. Interacts (GTP-bound form) with PLEKHM1 (via RUN domain); the interaction is required for PLEKHM1 localization to lysosomes and for ARL8B function in delivery and degradation of endocytic and autophagic cargo in lysosomes. PLEKHM1 and PLEKHM2 compete for interaction with ARL8B. Interacts (GTP-bound form) with RUFY1; the interaction is required for RUFY1 endosomal location. When GTP-bound, interacts with RUFY3 and RUFY4, but not with RUFY1, nor RUFY2. In terms of processing, ubiquitinated at Lys-141 by RNF167, leading to its degradation. Ubiquitously expressed.

Its subcellular location is the late endosome membrane. It is found in the lysosome membrane. It localises to the cytoplasm. The protein localises to the cytoskeleton. The protein resides in the spindle. Its subcellular location is the cell projection. It is found in the axon. It localises to the synapse. The protein localises to the cytolytic granule membrane. The protein resides in the early endosome membrane. It carries out the reaction GTP + H2O = GDP + phosphate + H(+). Functionally, small GTPase which cycles between active GTP-bound and inactive GDP-bound states. In its active state, binds to a variety of effector proteins playing a key role in the regulation of lysosomal positioning which is important for nutrient sensing, natural killer cell-mediated cytotoxicity and antigen presentation. Along with its effectors, orchestrates lysosomal transport and fusion. Localizes specifically to lysosomal membranes and mediates anterograde lysosomal motility by recruiting PLEKHM2, which in turn recruits the motor protein kinesin-1 on lysosomes. Required for lysosomal and cytolytic granule exocytosis. Critical factor involved in NK cell-mediated cytotoxicity. Drives the polarization of cytolytic granules and microtubule-organizing centers (MTOCs) toward the immune synapse between effector NK lymphocytes and target cells. In neurons, mediates the anterograde axonal long-range transport of presynaptic lysosome-related vesicles required for presynaptic biogenesis and synaptic function. Also acts as a regulator of endosome to lysosome trafficking pathways of special significance for host defense. Recruits RUFY1 onto early endosomes regulating endosomes to trans-Golgi network proteins retrieval. Regulates cargo trafficking to lysosomes by binding to PLEKHM1 and recruiting the HOPS subunit VPS41, resulting in functional assembly of the HOPS complex on lysosomal membranes. Plays an important role in cargo delivery to lysosomes for antigen presentation and microbial killing. Directs the intersection of CD1d with lipid antigens in lysosomes, and plays a role in intersecting phagosomes with lysosomes to generate phagolysosomes that kill microbes. Involved in the process of MHC II presentation. Regulates the delivery of antigens to lysosomes and the formation of MHC II-peptide complexes through the recruitment of the HOPS complex to lysosomes allowing the fusion of late endosomes to lysosomes. May play a role in chromosome segregation. Its function is as follows. (Microbial infection) During Mycobacterium tuberculosis (Mtb) infection, is required for plasma membrane repair by controlling the exocytosis of lysosomes in macrophages. ARL8B secretion pathway is crucial to control the type of cell death of the M.tuberculosis-infected macrophages, distinguishing avirulent from virulent Mtb induced necrotic cell death. In terms of biological role, (Microbial infection) During infection, coronaviruses such as SARS-CoV-2 and the chaperone HSPA5/GRP78 are probably co-released through ARL8B-dependent lysosomal exocytic pathway for unconventional egress. The protein is ADP-ribosylation factor-like protein 8B of Homo sapiens (Human).